Here is a 309-residue protein sequence, read N- to C-terminus: GTP cyclohydrolase MptA (309 aa).

This sequence belongs to the GTP cyclohydrolase IV family. As to quaternary structure, homodimer. Requires Fe(2+) as cofactor.

The enzyme catalyses GTP + H2O = 7,8-dihydroneopterin 2',3'-cyclic phosphate + formate + diphosphate + H(+). The protein operates within cofactor biosynthesis; 5,6,7,8-tetrahydromethanopterin biosynthesis. Its function is as follows. Converts GTP to 7,8-dihydro-D-neopterin 2',3'-cyclic phosphate, the first intermediate in the biosynthesis of coenzyme methanopterin. The protein is GTP cyclohydrolase MptA of Methanococcus aeolicus (strain ATCC BAA-1280 / DSM 17508 / OCM 812 / Nankai-3).